The following is a 117-amino-acid chain: Class I hydrophobin 2 (117 aa).

Residues 1–21 (EIVSLSLSLLAVVPLVVLVIA) form the signal peptide. 4 disulfides stabilise this stretch: Cys35-Cys96, Cys42-Cys90, Cys43-Cys76, and Cys97-Cys110.

Belongs to the fungal hydrophobin family. Self-assembles to form functional amyloid fibrils called rodlets. Self-assembly into fibrillar rodlets occurs spontaneously at hydrophobic:hydrophilic interfaces and the rodlets further associate laterally to form amphipathic monolayers.

The protein localises to the secreted. It is found in the cell wall. Aerial growth, conidiation, and dispersal of filamentous fungi in the environment rely upon a capability of their secreting small amphipathic proteins called hydrophobins (HPBs) with low sequence identity. Class I can self-assemble into an outermost layer of rodlet bundles on aerial cell surfaces, conferring cellular hydrophobicity that supports fungal growth, development and dispersal; whereas Class II form highly ordered films at water-air interfaces through intermolecular interactions but contribute nothing to the rodlet structure. The polypeptide is Class I hydrophobin 2 (Pisolithus tinctorius (Dead man's foot)).